The sequence spans 93 residues: UPF0367 protein tsr0804 (93 aa).

This sequence belongs to the UPF0367 family.

This is UPF0367 protein tsr0804 from Thermosynechococcus vestitus (strain NIES-2133 / IAM M-273 / BP-1).